The sequence spans 127 residues: MORF4 family-associated protein 1-like 1 (127 aa).

A coiled-coil region spans residues G87–V118.

This sequence belongs to the MORF4 family-associated protein family.

The protein is MORF4 family-associated protein 1-like 1 (MRFAP1L1) of Homo sapiens (Human).